We begin with the raw amino-acid sequence, 405 residues long: L-carnitine CoA-transferase (405 aa).

K97 and R104 together coordinate CoA. Residue D169 is the Nucleophile of the active site.

Belongs to the CoA-transferase III family. CaiB subfamily. In terms of assembly, homodimer.

The protein resides in the cytoplasm. It carries out the reaction crotonobetainyl-CoA + (R)-carnitine = crotonobetaine + (R)-carnitinyl-CoA. It catalyses the reaction 4-(trimethylamino)butanoyl-CoA + (R)-carnitine = (R)-carnitinyl-CoA + 4-(trimethylamino)butanoate. It functions in the pathway amine and polyamine metabolism; carnitine metabolism. Its function is as follows. Catalyzes the reversible transfer of the CoA moiety from gamma-butyrobetainyl-CoA to L-carnitine to generate L-carnitinyl-CoA and gamma-butyrobetaine. Is also able to catalyze the reversible transfer of the CoA moiety from gamma-butyrobetainyl-CoA or L-carnitinyl-CoA to crotonobetaine to generate crotonobetainyl-CoA. The chain is L-carnitine CoA-transferase from Escherichia coli O6:K15:H31 (strain 536 / UPEC).